Consider the following 700-residue polypeptide: Elongation factor G (700 aa).

The tr-type G domain occupies 8 to 290; sequence ERYRNIGISA…AVVEYLPAPT (283 aa). GTP-binding positions include 17-24, 88-92, and 142-145; these read AHIDAGKT, DTPGH, and NKMD.

It belongs to the TRAFAC class translation factor GTPase superfamily. Classic translation factor GTPase family. EF-G/EF-2 subfamily.

It localises to the cytoplasm. Catalyzes the GTP-dependent ribosomal translocation step during translation elongation. During this step, the ribosome changes from the pre-translocational (PRE) to the post-translocational (POST) state as the newly formed A-site-bound peptidyl-tRNA and P-site-bound deacylated tRNA move to the P and E sites, respectively. Catalyzes the coordinated movement of the two tRNA molecules, the mRNA and conformational changes in the ribosome. This is Elongation factor G from Haemophilus influenzae (strain PittEE).